Consider the following 263-residue polypeptide: Putative TATA-binding protein pB263R (263 aa).

It belongs to the asfivirus B263R family.

Its function is as follows. Putative TATA-binding protein. The sequence is that of Putative TATA-binding protein pB263R from Ornithodoros (relapsing fever ticks).